Consider the following 245-residue polypeptide: Transmembrane and ubiquitin-like domain-containing protein 1 (245 aa).

The tract at residues 2–30 (ALIEGVGDEVTVLFAVLACLLVLALAWVS) is required to release iHOPS from membranes. Residues 11-31 (VTVLFAVLACLLVLALAWVST) form a helical membrane-spanning segment. The tract at residues 33–100 (TTESTDPQPQ…ASTPPDSPQE (68 aa)) is disordered. Phosphoserine is present on residues serine 73, serine 97, and serine 126. The 74-residue stretch at 102–175 (LLLRLKFLND…LHCHVSTRVG (74 aa)) folds into the Ubiquitin-like domain. 2 helical membrane passes run 194-214 (IGSL…YCQI) and 219-239 (FFPL…SLLA).

As to quaternary structure, interacts with EEF1A1, CAMLG, GRIA2 and GRIP1. Interacts with NPM1 and CDKN2A; TMUB1 can enhance interaction between NPM1 and CDKN2A and is proposed to bridge the proteins; proposed to be mediated by iHOPS. Interacts with TUBG1. Interacts with ERLIN2 and AMFR; TMUB1 promotes the interaction of ERLIN2 with AMFR. Isoform 1 (lHOPS) is processed by regulated intramembrane proteolysis (RIP) in the N-terminus to release iHOPS from membranes. Post-translationally, isoform 2 seems to undergo a selective cleavage in the C-terminal region to release an additional cytoplasmic form. Expressed in adult brain; at protein level. Isoform 1 (lHOPS) is highly expressed in small intestine, stomach and epididymis. Isoform 2 (sHOPS) and iHOPS are abundantly expressed in brain, liver and adrenal gland.

The protein localises to the membrane. The protein resides in the postsynaptic cell membrane. It is found in the recycling endosome. Its subcellular location is the cytoplasm. It localises to the nucleus. The protein localises to the nucleolus. The protein resides in the cytoskeleton. It is found in the microtubule organizing center. Its subcellular location is the centrosome. Involved in sterol-regulated ubiquitination and degradation of HMG-CoA reductase HMGCR. Involved in positive regulation of AMPA-selective glutamate receptor GRIA2 recycling to the cell surface. Acts as a negative regulator of hepatocyte growth during regeneration. In terms of biological role, may contribute to the regulation of translation during cell-cycle progression. May contribute to the regulation of cell proliferation. May be involved in centrosome assembly. Modulates stabilization and nucleolar localization of tumor suppressor CDKN2A and enhances association between CDKN2A and NPM1. This chain is Transmembrane and ubiquitin-like domain-containing protein 1 (Tmub1), found in Mus musculus (Mouse).